Reading from the N-terminus, the 298-residue chain is Acetyl-coenzyme A carboxylase carboxyl transferase subunit beta (298 aa).

Residues 25–295 (VWAKCANCGE…SADHREHVVA (271 aa)) enclose the CoA carboxyltransferase N-terminal domain. Positions 29, 32, 48, and 51 each coordinate Zn(2+). Residues 29 to 51 (CANCGELTYQKQFNDALKVCPKC) form a C4-type zinc finger.

Belongs to the AccD/PCCB family. In terms of assembly, acetyl-CoA carboxylase is a heterohexamer composed of biotin carboxyl carrier protein (AccB), biotin carboxylase (AccC) and two subunits each of ACCase subunit alpha (AccA) and ACCase subunit beta (AccD). Zn(2+) is required as a cofactor.

Its subcellular location is the cytoplasm. The enzyme catalyses N(6)-carboxybiotinyl-L-lysyl-[protein] + acetyl-CoA = N(6)-biotinyl-L-lysyl-[protein] + malonyl-CoA. The protein operates within lipid metabolism; malonyl-CoA biosynthesis; malonyl-CoA from acetyl-CoA: step 1/1. Functionally, component of the acetyl coenzyme A carboxylase (ACC) complex. Biotin carboxylase (BC) catalyzes the carboxylation of biotin on its carrier protein (BCCP) and then the CO(2) group is transferred by the transcarboxylase to acetyl-CoA to form malonyl-CoA. This is Acetyl-coenzyme A carboxylase carboxyl transferase subunit beta from Herpetosiphon aurantiacus (strain ATCC 23779 / DSM 785 / 114-95).